Reading from the N-terminus, the 363-residue chain is MTDKTYKIAVLPGDGIGPEVMAQAHKVLDAIEKKHAIHFEREEHDVGGIAIDNHGCPLPQSTVTACEESDAVLFGSVGGPKWEHLPPNDQPERGALLPLRKHFQLFCNLRPAQIHSGLEAFSPLRADISGRGFDIVVVRELTGGIYFGQPKGREGEGANEKAYDTEIYHRFEIERIAKIAFESARLRRKKVCSIDKANVLQSSILWREVVEELAKDYPDVELSHMYIDNATMQLIKDPAQFDVMLCSNIFGDIISDECAMITGSMGMLPSASLNESKFGLYEPAGGSAPDIAGKNIANPVAQILSAALMLRYSLGEEAAAQDIENAVSQALAAGELTADLAGDKPALSTAEMGDKIAQYILNS.

79 to 92 (GPKWEHLPPNDQPE) contacts NAD(+). Arg-100, Arg-110, Arg-139, and Asp-228 together coordinate substrate. Mg(2+) is bound by residues Asp-228, Asp-252, and Asp-256. 286–298 (GSAPDIAGKNIAN) provides a ligand contact to NAD(+).

Belongs to the isocitrate and isopropylmalate dehydrogenases family. LeuB type 1 subfamily. As to quaternary structure, homodimer. The cofactor is Mg(2+). Mn(2+) serves as cofactor.

It localises to the cytoplasm. It carries out the reaction (2R,3S)-3-isopropylmalate + NAD(+) = 4-methyl-2-oxopentanoate + CO2 + NADH. It participates in amino-acid biosynthesis; L-leucine biosynthesis; L-leucine from 3-methyl-2-oxobutanoate: step 3/4. Catalyzes the oxidation of 3-carboxy-2-hydroxy-4-methylpentanoate (3-isopropylmalate) to 3-carboxy-4-methyl-2-oxopentanoate. The product decarboxylates to 4-methyl-2 oxopentanoate. This is 3-isopropylmalate dehydrogenase from Vibrio vulnificus (strain CMCP6).